A 230-amino-acid chain; its full sequence is Orotidine 5'-phosphate decarboxylase (230 aa).

Substrate-binding positions include aspartate 10, lysine 32, 59-68 (DLKYHDIPNT), threonine 119, arginine 180, glutamine 189, glycine 209, and arginine 210. The active-site Proton donor is the lysine 61.

It belongs to the OMP decarboxylase family. Type 1 subfamily. Homodimer.

The enzyme catalyses orotidine 5'-phosphate + H(+) = UMP + CO2. Its pathway is pyrimidine metabolism; UMP biosynthesis via de novo pathway; UMP from orotate: step 2/2. Its function is as follows. Catalyzes the decarboxylation of orotidine 5'-monophosphate (OMP) to uridine 5'-monophosphate (UMP). The protein is Orotidine 5'-phosphate decarboxylase of Glaesserella parasuis serovar 5 (strain SH0165) (Haemophilus parasuis).